Reading from the N-terminus, the 260-residue chain is 3'-5' ssDNA/RNA exonuclease TatD (260 aa).

A divalent metal cation contacts are provided by Glu-91, His-127, and His-152.

It belongs to the metallo-dependent hydrolases superfamily. TatD-type hydrolase family. TatD subfamily. Monomer. Mg(2+) is required as a cofactor.

The protein localises to the cytoplasm. In terms of biological role, 3'-5' exonuclease that prefers single-stranded DNA and RNA. May play a role in the H(2)O(2)-induced DNA damage repair. The protein is 3'-5' ssDNA/RNA exonuclease TatD of Salmonella typhimurium (strain LT2 / SGSC1412 / ATCC 700720).